The primary structure comprises 153 residues: Ribosome maturation factor RimP (153 aa).

It belongs to the RimP family.

Its subcellular location is the cytoplasm. Functionally, required for maturation of 30S ribosomal subunits. In Clostridium botulinum (strain Loch Maree / Type A3), this protein is Ribosome maturation factor RimP.